The chain runs to 130 residues: Gonadotropin subunit beta-1 (130 aa).

The N-terminal stretch at 1-18 (MRMRFVVMVILLPALMMS) is a signal peptide. Disulfide bonds link C26-C74, C40-C89, C51-C105, C55-C107, and C110-C117. N30 carries N-linked (GlcNAc...) asparagine glycosylation.

This sequence belongs to the glycoprotein hormones subunit beta family. In terms of assembly, heterodimer of an alpha and a beta chain.

The protein localises to the secreted. Involved in gametogenesis and steroidogenesis. This chain is Gonadotropin subunit beta-1 (cgba), found in Carassius auratus (Goldfish).